The primary structure comprises 1333 residues: DNA-directed RNA polymerase subunit beta' (1333 aa).

Zn(2+) is bound by residues Cys60, Cys62, Cys75, and Cys78. Residues Asp535, Asp537, and Asp539 each contribute to the Mg(2+) site. Residues Cys901, Cys983, Cys990, and Cys993 each coordinate Zn(2+).

It belongs to the RNA polymerase beta' chain family. As to quaternary structure, the RNAP catalytic core consists of 2 alpha, 1 beta, 1 beta' and 1 omega subunit. When a sigma factor is associated with the core the holoenzyme is formed, which can initiate transcription. Mg(2+) serves as cofactor. It depends on Zn(2+) as a cofactor.

It carries out the reaction RNA(n) + a ribonucleoside 5'-triphosphate = RNA(n+1) + diphosphate. Functionally, DNA-dependent RNA polymerase catalyzes the transcription of DNA into RNA using the four ribonucleoside triphosphates as substrates. This Corynebacterium glutamicum (strain ATCC 13032 / DSM 20300 / JCM 1318 / BCRC 11384 / CCUG 27702 / LMG 3730 / NBRC 12168 / NCIMB 10025 / NRRL B-2784 / 534) protein is DNA-directed RNA polymerase subunit beta'.